Here is a 287-residue protein sequence, read N- to C-terminus: Eukaryotic translation initiation factor 3 subunit F (287 aa).

The 131-residue stretch at 12–142 folds into the MPN domain; it reads VRVHPVVLFQ…IKAYVCVSLG (131 aa).

Belongs to the eIF-3 subunit F family. In terms of assembly, component of the eukaryotic translation initiation factor 3 (eIF-3) complex.

The protein localises to the cytoplasm. In terms of biological role, component of the eukaryotic translation initiation factor 3 (eIF-3) complex, which is involved in protein synthesis of a specialized repertoire of mRNAs and, together with other initiation factors, stimulates binding of mRNA and methionyl-tRNAi to the 40S ribosome. The eIF-3 complex specifically targets and initiates translation of a subset of mRNAs involved in cell proliferation. The sequence is that of Eukaryotic translation initiation factor 3 subunit F from Anopheles gambiae (African malaria mosquito).